We begin with the raw amino-acid sequence, 225 residues long: UPF0758 protein XAC3915 (225 aa).

Residues 102-224 (ALSDPPSVGR…PVSFAERGWL (123 aa)) enclose the MPN domain. Zn(2+) is bound by residues histidine 173, histidine 175, and aspartate 186. Residues 173-186 (HNHPSGNPEPSEAD) carry the JAMM motif motif.

Belongs to the UPF0758 family.

In Xanthomonas axonopodis pv. citri (strain 306), this protein is UPF0758 protein XAC3915.